The sequence spans 393 residues: Serine/threonine protein kinase AFUB_078980 (393 aa).

A Protein kinase domain is found at 61-390; that stretch reads YQVLSKLGFG…APELLTDPWL (330 aa). ATP contacts are provided by residues 67–75 and lysine 90; that span reads LGFGANSTV. The Proton acceptor role is filled by aspartate 190.

It belongs to the protein kinase superfamily. CMGC Ser/Thr protein kinase family.

It carries out the reaction L-seryl-[protein] + ATP = O-phospho-L-seryl-[protein] + ADP + H(+). It catalyses the reaction L-threonyl-[protein] + ATP = O-phospho-L-threonyl-[protein] + ADP + H(+). Functionally, serine/threonine protein kinase; part of the subtelomeric hrmA-associated cluster (HAC) containing genes that alter the hyphal surface (such as reduced total chitin or increased beta-glucan exposure) and perturb inter-hyphal interactions within the developing biofilms, resulting in a loss of vertically aligned polarized growing filaments. Consequently, this hypoxia-typic morphotype (called H-MORPH) with altered biofilm architecture leads to increased hypoxia fitness, increased host inflammation, rapid disease progression, and mortality in a murine model of invasive aspergillosis. This Aspergillus fumigatus (strain CBS 144.89 / FGSC A1163 / CEA10) (Neosartorya fumigata) protein is Serine/threonine protein kinase AFUB_078980.